Reading from the N-terminus, the 619-residue chain is TOX high mobility group box family member 4 (619 aa).

2 disordered regions span residues 153–227 (LGLS…QKPV) and 304–337 (DMDPAPPSQTPSPPPVAAADPASPAPASTEPPAL). Phosphothreonine is present on Thr176. 3 positions are modified to phosphoserine: Ser178, Ser181, and Ser182. Residues 183–193 (LHEDGVEEFRR) show a composition bias toward basic and acidic residues. Over residues 208–218 (KQKAPKKRKKK) the composition is skewed to basic residues. Positions 213–218 (KKRKKK) match the Nuclear localization signal motif. A DNA-binding region (HMG box) is located at residues 223–291 (PQKPVSAYAL…EYLKALAAYK (69 aa)). Residues 307 to 319 (PAPPSQTPSPPPV) show a composition bias toward pro residues. Thr313 is modified (phosphothreonine). Ser315 bears the Phosphoserine mark. Residues 320 to 337 (AAADPASPAPASTEPPAL) are compositionally biased toward low complexity. At Arg479 the chain carries Asymmetric dimethylarginine. The disordered stretch occupies residues 507-529 (PPPVESSPEQPVNNSPETHTVEE). Residues 512 to 524 (SSPEQPVNNSPET) show a composition bias toward low complexity. Residues Ser548, Ser550, Ser558, Ser560, and Ser565 each carry the phosphoserine modification.

Component of the PNUTS-PP1 phosphatase complex, composed of PPP1R10/PNUTS, TOX4, WDR82 and PPP1CA or PPP1CB or PPP1CC. Interacts with PPP1R10/PNUTS. Interacts with FOXO1 and CREB1 (increased by cAMP); FOXO1 and CREB1 are required for full induction of TOX4-dependent activity and the interactions are inhibited by insulin.

The protein resides in the nucleus. It is found in the chromosome. Its activity is regulated as follows. In liver, recruited to target gene promoters following treatment with dexamethasone and cAMP. Binding is decreased in presence of insulin. Functionally, transcription factor that modulates cell fate reprogramming from the somatic state to the pluripotent and neuronal fate. In liver, controls the expression of hormone-regulated gluconeogenic genes such as G6PC1 and PCK1. This regulation is independent of the insulin receptor activation. Also acts as a regulatory component of protein phosphatase 1 (PP1) complexes. Component of the PNUTS-PP1 protein phosphatase complex, a PP1 complex that regulates RNA polymerase II transcription pause-release. PNUTS-PP1 also plays a role in the control of chromatin structure and cell cycle progression during the transition from mitosis into interphase. This is TOX high mobility group box family member 4 (TOX4) from Bos taurus (Bovine).